A 928-amino-acid polypeptide reads, in one-letter code: Mitogen-activated protein kinase kinase kinase dlk-1 (928 aa).

The interval M1–K72 is disordered. A compositionally biased stretch (polar residues) spans L42–I52. Over residues Q53–P69 the composition is skewed to basic and acidic residues. A Protein kinase domain is found at I135 to I377. ATP is bound by residues L141–V149 and K162. D246 serves as the catalytic Proton acceptor. A leucine-zipper region spans residues L459–L480. Disordered regions lie at residues R483–R575, R644–N696, and E802–S845. The segment covering G509 to V519 has biased composition (acidic residues). The segment covering S530–T557 has biased composition (low complexity). Positions S605–D814 are important for interaction between isoform a and isoform c. Residues S647–V656 show a composition bias toward polar residues. A compositionally biased stretch (low complexity) spans S677–R695. Positions A823 to G833 are enriched in acidic residues. Phosphoserine is present on residues S874 and S878. An SDGLSD hexapeptide motif is present at residues S874 to D879.

The protein belongs to the protein kinase superfamily. STE Ser/Thr protein kinase family. MAP kinase kinase kinase subfamily. Homooligomer (via leucine zipper domain and hexapeptide motif). Isoform a (via leucine zipper domain) forms a heterooligomer with isoform c (via leucine zipper domain). Isoform c does not self-associate. The cofactor is Mg(2+). Ubiquitinated by rpm-1. Negatively regulated by ubiquitination by fsn-1 bound rpm-1, followed by degradation. Post-translationally, phosphorylation at Ser-874 and/or at Ser-878 abolishes interaction with isoform c and promotes binding to isoform a kinase domain (likely in trans) resulting in isoform a self-association and activation. Expressed in nerve ring, nerve cord, neurons, and pharynx.

The protein localises to the synapse. It localises to the cytoplasm. Its subcellular location is the cell projection. It is found in the axon. The protein resides in the dendrite. The protein localises to the cilium. It catalyses the reaction L-seryl-[protein] + ATP = O-phospho-L-seryl-[protein] + ADP + H(+). The enzyme catalyses L-threonyl-[protein] + ATP = O-phospho-L-threonyl-[protein] + ADP + H(+). With respect to regulation, inactive when associated with isoform c. Dissociation from isoform c, which is dependent on the phosphorylation of the C-terminal hexapeptide, results in self-association and activation. Transient increase in Ca(2+) levels caused by axonal injury or synaptic activity triggers the dissociation of isoform a from isoform c; the dissociation may be influenced by the phosphorylation status of the C-terminal hexapeptide. Functionally, component of a MAP kinase pathway that functions presynaptically to regulate synaptic architecture and presynaptic differentiation. Phosphorylates and activates mkk-4. Has a role in axonal regrowth following injury and synaptogenesis. Plays a role in modulating polymerization of neuronal microtubules. Also promotes tubulin post-translational modifications that protect microtubules. Plays a role in cilium length regulation, possibly by reducing rab-5 mediated endocytosis, and may also have a role in intraflagellar transport in cilia. Plays a role in the formation of muscle connections, also called muscle arm extensions, between the body wall and the motor axons in the dorsal and ventral cord. Has a role in synapse and axon development, and in axonal regrowth following injury. In terms of biological role, by forming heterooligomers with isoform a, acts as an inhibitor of isoform a activation. Its inhibitory function is independent of its catalytic activity. This is Mitogen-activated protein kinase kinase kinase dlk-1 (dlk-1) from Caenorhabditis elegans.